The chain runs to 651 residues: Transcription termination factor FttA (651 aa).

An archaeal CPSF-KH domain region spans residues 1-200 (MTFLIKRETQ…ITGLGGFREV (200 aa)). The segment at 12–79 (DQILRDIRAV…ISVRPDPEVL (68 aa)) is KHa. The KHb stretch occupies residues 80–147 (LPPEEAEKLI…WAPKVVRTPP (68 aa)). The segment at 188–398 (WIRITGLGGF…LVMESTYGGA (211 aa)) is metallo-beta-lactamase N-terminus. 6 residues coordinate Zn(2+): H256, H258, D260, H261, H344, and D367. The interval 399 to 592 (NDIQMPREEA…MEVHTIDGFS (194 aa)) is beta-Casp. The segment at 593–651 (GHADRRELMNYVAKVRPRPERIITVHGEPQKCLDLATSIHRKFGISTRAPNNLDTIRLR) is metallo-beta-lactamase C-terminus. H618 provides a ligand contact to Zn(2+).

The protein belongs to the metallo-beta-lactamase superfamily. RNA-metabolizing metallo-beta-lactamase-like family. FttA subfamily. In terms of assembly, homodimer. Interacts with RNA polymerase (RNAP), interacts with the Spt4-Spt5 complex. It depends on Zn(2+) as a cofactor.

In terms of biological role, terminates transcription on the whole genome. Termination is linked to FttA-mediated RNA cleavage and does not require NTP hydrolysis. Cleaves endonucleolytically at the RNA exit channel of RNA polymerase (RNAP); the 5'-3' exonuclease activity of this protein degrades the nascent RNA released from RNAP. Its function is as follows. Has nuclease activity on single-stranded RNA. The chain is Transcription termination factor FttA from Pyrococcus horikoshii (strain ATCC 700860 / DSM 12428 / JCM 9974 / NBRC 100139 / OT-3).